A 439-amino-acid chain; its full sequence is Tol-Pal system protein TolB (439 aa).

The N-terminal stretch at methionine 1–alanine 21 is a signal peptide.

It belongs to the TolB family. In terms of assembly, the Tol-Pal system is composed of five core proteins: the inner membrane proteins TolA, TolQ and TolR, the periplasmic protein TolB and the outer membrane protein Pal. They form a network linking the inner and outer membranes and the peptidoglycan layer.

The protein resides in the periplasm. Part of the Tol-Pal system, which plays a role in outer membrane invagination during cell division and is important for maintaining outer membrane integrity. The protein is Tol-Pal system protein TolB of Rhizorhabdus wittichii (strain DSM 6014 / CCUG 31198 / JCM 15750 / NBRC 105917 / EY 4224 / RW1) (Sphingomonas wittichii).